A 595-amino-acid chain; its full sequence is Elongation factor 4 (595 aa).

The tr-type G domain maps to 2-183; sequence KNIRNFCIIA…AIVEQVPAPA (182 aa). GTP-binding positions include 14–19 and 130–133; these read DHGKST and NKVD.

The protein belongs to the TRAFAC class translation factor GTPase superfamily. Classic translation factor GTPase family. LepA subfamily.

It is found in the cell inner membrane. The catalysed reaction is GTP + H2O = GDP + phosphate + H(+). In terms of biological role, required for accurate and efficient protein synthesis under certain stress conditions. May act as a fidelity factor of the translation reaction, by catalyzing a one-codon backward translocation of tRNAs on improperly translocated ribosomes. Back-translocation proceeds from a post-translocation (POST) complex to a pre-translocation (PRE) complex, thus giving elongation factor G a second chance to translocate the tRNAs correctly. Binds to ribosomes in a GTP-dependent manner. In Porphyromonas gingivalis (strain ATCC 33277 / DSM 20709 / CIP 103683 / JCM 12257 / NCTC 11834 / 2561), this protein is Elongation factor 4.